A 114-amino-acid polypeptide reads, in one-letter code: MPQQTIEELYEQALERKQNPQTGSYTDYLYQKGLDKILKKVGEESTEVILGAKNNNEELIYETSDLLFHLMVLLVEKGVSLDDIKDELGSRLGKKSLLHERADWRGDKKNEKDS.

The protein belongs to the PRA-PH family.

It localises to the cytoplasm. It catalyses the reaction 1-(5-phospho-beta-D-ribosyl)-ATP + H2O = 1-(5-phospho-beta-D-ribosyl)-5'-AMP + diphosphate + H(+). The protein operates within amino-acid biosynthesis; L-histidine biosynthesis; L-histidine from 5-phospho-alpha-D-ribose 1-diphosphate: step 2/9. The protein is Phosphoribosyl-ATP pyrophosphatase of Leuconostoc mesenteroides subsp. mesenteroides (strain ATCC 8293 / DSM 20343 / BCRC 11652 / CCM 1803 / JCM 6124 / NCDO 523 / NBRC 100496 / NCIMB 8023 / NCTC 12954 / NRRL B-1118 / 37Y).